We begin with the raw amino-acid sequence, 382 residues long: V-set and immunoglobulin domain-containing protein 1 (382 aa).

Positions 1–21 (MGLTFWKVFLILNCLAGQVNG) are cleaved as a signal peptide. The Ig-like V-type domain occupies 22-133 (VQVTIPDSFV…FFGKNQGTIS (112 aa)). Over 22–234 (VQVTIPDSFV…DLTTPYPGIG (213 aa)) the chain is Extracellular. An N-linked (GlcNAc...) asparagine glycan is attached at N32. 2 disulfide bridges follow: C43/C116 and C161/C211. Residues 140-227 (PSKPFCSIQG…GNSSCEIDLT (88 aa)) form the Ig-like C2-type domain. 2 N-linked (GlcNAc...) asparagine glycosylation sites follow: N200 and N219. The helical transmembrane segment at 235-255 (IIVGAFVGTLIGVIIIISVVW) threads the bilayer. Residues 256–382 (FVRRKVKAKG…FCDEEKVIKP (127 aa)) lie on the Cytoplasmic side of the membrane. Residues 266 to 382 (KERKRNSKTT…FCDEEKVIKP (117 aa)) form a disordered region. The span at 273 to 285 (KTTTELEPMTKIN) shows a compositional bias: polar residues. A compositionally biased stretch (basic and acidic residues) spans 286–298 (QRTEGETMPREDA). Residues 327-341 (EPEPALQPTVEPPSG) are compositionally biased toward pro residues.

It is found in the membrane. This Bos taurus (Bovine) protein is V-set and immunoglobulin domain-containing protein 1 (VSIG1).